Here is a 156-residue protein sequence, read N- to C-terminus: MAATLTPEQITEYKGIFEMFDEEGNGLVKTDDLESLMSLIGINPTKRDLANMAKDVDKDKKGTFNCEGFLVLMGIYHEKSKNQDEELRAAFKVFDKEHKGYIEWDTLKYVLMNAGEPLNEHEAELMMKEADKDGDGTIDYEEFVAMMTGESFKLTQ.

4 EF-hand domains span residues 8–43 (EQITEYKGIFEMFDEEGNGLVKTDDLESLMSLIGIN), 44–79 (PTKRDLANMAKDVDKDKKGTFNCEGFLVLMGIYHEK), 82–117 (NQDEELRAAFKVFDKEHKGYIEWDTLKYVLMNAGEP), and 118–153 (LNEHEAELMMKEADKDGDGTIDYEEFVAMMTGESFK). Ca(2+) is bound by residues Asp131, Asp133, Asp135, Thr137, and Glu142.

The protein belongs to the calmodulin family. Calglandulin subfamily. In terms of tissue distribution, expressed by the venom gland.

The protein resides in the cytoplasm. In terms of biological role, may be involved in the cellular control mechanism of the secretion of toxins from the gland into the venom. This Tropidechis carinatus (Australian rough-scaled snake) protein is Calglandulin.